The primary structure comprises 311 residues: Formyltransferase/hydrolase complex subunit D (311 aa).

Belongs to the FTR family. Homotetramer. Octaheteromer. Part of the formyltransferase/hydrolase complex fhc; composed of FhcA, FhcB, FhcC and FhcD.

It localises to the cytoplasm. It catalyses the reaction N-formylmethanofuran + 5,6,7,8-tetrahydromethanopterin + H(+) = N(5)-formyl-5,6,7,8-tetrahydromethanopterin + methanofuran. It functions in the pathway one-carbon metabolism; formaldehyde degradation; formate from formaldehyde (H(4)MPT route): step 4/5. Involved in the transformation of 5-formyl tetrahydromethanopterin (5-formyl-H(4)MPT) to methanofuran (MFR) and formate via the intermediate formylmethanofuran (formyl-MFR). Catalyzes the transfer of a formyl group from 5-formyl-H(4)MPT to MFR to produce tetrahydromethanopterin (H(4)MPT) and formyl-MFR, which is then hydrolyzed to formate and MFR. The sequence is that of Formyltransferase/hydrolase complex subunit D from Methylorubrum extorquens (strain ATCC 14718 / DSM 1338 / JCM 2805 / NCIMB 9133 / AM1) (Methylobacterium extorquens).